The following is a 443-amino-acid chain: Serine/threonine-protein kinase ISR1 (443 aa).

Residues 135-415 (LPSNKLVGQG…LRNDLFQDWK (281 aa)) enclose the Protein kinase domain. ATP is bound by residues 141–149 (VGQGSYSYV) and lysine 169. Aspartate 280 (proton acceptor) is an active-site residue.

It belongs to the protein kinase superfamily. Ser/Thr protein kinase family.

The catalysed reaction is L-seryl-[protein] + ATP = O-phospho-L-seryl-[protein] + ADP + H(+). It catalyses the reaction L-threonyl-[protein] + ATP = O-phospho-L-threonyl-[protein] + ADP + H(+). Probable serine/threonine protein kinase which may function redundantly with MPK1-independent branch of the PCK1 pathway that is presumed to be required for the tolerance to high temperatures and staurosporine. The chain is Serine/threonine-protein kinase ISR1 (ISR1) from Saccharomyces cerevisiae (strain ATCC 204508 / S288c) (Baker's yeast).